The chain runs to 219 residues: Large ribosomal subunit protein uL1 (219 aa).

The protein belongs to the universal ribosomal protein uL1 family. In terms of assembly, component of the large ribosomal subunit.

It localises to the cytoplasm. The sequence is that of Large ribosomal subunit protein uL1 (RPL1) from Encephalitozoon cuniculi (strain GB-M1) (Microsporidian parasite).